The following is a 1180-amino-acid chain: Nonsense-mediated mRNA decay factor SMG7 (1180 aa).

TPR repeat units follow at residues Q151 to N184 and Q186 to F218. Disordered regions lie at residues P496–T636, Q692–Q795, C893–L913, S1019–Q1127, and S1148–H1180. Over residues L504–G520 the composition is skewed to polar residues. Basic and acidic residues-rich tracts occupy residues E547–N559, N584–D606, and T615–K627. Polar residues predominate over residues Q692 to P718. Positions P728 to Q740 are enriched in pro residues. The span at T741–Q778 shows a compositional bias: low complexity. Over residues W1026 to T1038 the composition is skewed to polar residues. The span at P1039–P1065 shows a compositional bias: low complexity. Over residues D1076 to K1090 the composition is skewed to basic and acidic residues. A compositionally biased stretch (polar residues) spans S1103–A1125.

Its subcellular location is the cytoplasm. It localises to the nucleus. Its function is as follows. Plays a role in nonsense-mediated mRNA decay. Recruits UPF1 to cytoplasmic mRNA decay bodies. Together with SMG5 is thought to provide a link to the mRNA degradation machinery involving exonucleolytic pathways, and to serve as an adapter for UPF1 to protein phosphatase 2A (PP2A), thereby triggering UPF1 dephosphorylation. Required for normal embryonic development. The chain is Nonsense-mediated mRNA decay factor SMG7 from Danio rerio (Zebrafish).